The sequence spans 379 residues: Thiosulfate/3-mercaptopyruvate sulfurtransferase 1, mitochondrial (379 aa).

The transit peptide at 1–56 (MASTLFSRTFLAASHRLITPSLPQKIFNPATFLSRSLHSQLGSASTAYKSTTWARR) directs the protein to the mitochondrion. The residue at position 57 (Ala-57) is an N-acetylalanine. Rhodanese domains lie at 91–208 (REPD…DVES) and 259–373 (EDPT…LPIE). Cys-333 functions as the Cysteine persulfide intermediate in the catalytic mechanism.

Expressed in roots, rosette and cauline leaves, stems, flowers and siliques.

It is found in the mitochondrion. It catalyses the reaction thiosulfate + hydrogen cyanide = thiocyanate + sulfite + 2 H(+). The catalysed reaction is 2-oxo-3-sulfanylpropanoate + [thioredoxin]-dithiol = [thioredoxin]-disulfide + hydrogen sulfide + pyruvate + H(+). In terms of biological role, catalyzes the transfer of a sulfur ion from a donor to cyanide or to other thiol compounds. Substrate preference is 3-mercaptopyruvate &gt; thiosulfate. Involved in embryo and seed development. The polypeptide is Thiosulfate/3-mercaptopyruvate sulfurtransferase 1, mitochondrial (STR1) (Arabidopsis thaliana (Mouse-ear cress)).